We begin with the raw amino-acid sequence, 397 residues long: Phosphoglycerate kinase (397 aa).

Residues 25–27 (DLN), Arg41, 64–67 (HLGR), Arg118, and Arg151 each bind substrate. Residues Lys202, Glu324, and 350–353 (GGDT) each bind ATP.

This sequence belongs to the phosphoglycerate kinase family. In terms of assembly, monomer.

The protein resides in the cytoplasm. The catalysed reaction is (2R)-3-phosphoglycerate + ATP = (2R)-3-phospho-glyceroyl phosphate + ADP. The protein operates within carbohydrate degradation; glycolysis; pyruvate from D-glyceraldehyde 3-phosphate: step 2/5. The chain is Phosphoglycerate kinase from Acidovorax sp. (strain JS42).